A 245-amino-acid chain; its full sequence is MLPLLIALQFLTSLPIRLPAMPTPRQQGRSLLHYPAVGLFLGALLWLAALLLEGASPLLQAALLLALWVALTGALHLDGLADSADAWLGGFGDPARTLEIMKDPRSGPVAVVVLVIMLLLKFSALLVVLQAQQPAALVLAPLLGRAALLALFLCTPYVRPNGLGQALAANLPRSRALMVLALVVIGCLLLGATGLLALTLAGVTFLLARRAMLRRLGGTTGDTAGALLELVECAVLVGLALQVGR.

5 helical membrane-spanning segments follow: residues 31–51 (LLHYPAVGLFLGALLWLAALL), 57–77 (PLLQAALLLALWVALTGALHL), 109–129 (VAVVVLVIMLLLKFSALLVVL), 134–154 (PAALVLAPLLGRAALLALFLC), and 176–196 (ALMVLALVVIGCLLLGATGLL).

This sequence belongs to the CobS family. The cofactor is Mg(2+).

The protein localises to the cell inner membrane. The catalysed reaction is alpha-ribazole + adenosylcob(III)inamide-GDP = adenosylcob(III)alamin + GMP + H(+). The enzyme catalyses alpha-ribazole 5'-phosphate + adenosylcob(III)inamide-GDP = adenosylcob(III)alamin 5'-phosphate + GMP + H(+). It functions in the pathway cofactor biosynthesis; adenosylcobalamin biosynthesis; adenosylcobalamin from cob(II)yrinate a,c-diamide: step 7/7. Joins adenosylcobinamide-GDP and alpha-ribazole to generate adenosylcobalamin (Ado-cobalamin). Also synthesizes adenosylcobalamin 5'-phosphate from adenosylcobinamide-GDP and alpha-ribazole 5'-phosphate. This is Adenosylcobinamide-GDP ribazoletransferase from Stutzerimonas stutzeri (strain A1501) (Pseudomonas stutzeri).